Here is a 458-residue protein sequence, read N- to C-terminus: Tetracycline resistance protein (458 aa).

A run of 12 helical transmembrane segments spans residues 12 to 33 (HNQVLIWLCVLSFFSVLNEMVL), 81 to 100 (LLLFGIMVNGLGSIIGFVGH), 111 to 129 (FIQGIGAAAFPALVMVVVA), 140 to 162 (AFGLIGSLVAMGEGVGPAIGGMV), 165 to 185 (YIHWSYLLLIPTATIITVPFL), 201 to 221 (MAGIILMSAGIVFFMLFTTSY), 223 to 240 (FSFLIISILAFFIFVQHI), 256 to 276 (VFFVIGTLCGGLIFGTVAGFV), 297 to 317 (GIIFPGTMSVIIFGYIGGLLV), 324 to 344 (YVLTIGSALLSSGFLIAAFFI), 346 to 365 (AAPWIMTIIVIFVFGGLSFT), and 432 to 451 (MLILFAGIIVICWLVILNVY).

Belongs to the major facilitator superfamily. TCR/Tet family.

The protein localises to the cell membrane. In terms of biological role, resistance to tetracycline by an active tetracycline efflux. This is an energy-dependent process that decreases the accumulation of the antibiotic in whole cells. This protein functions as a metal-tetracycline/H(+) antiporter. The sequence is that of Tetracycline resistance protein (tetB) from Bacillus subtilis (strain 168).